The primary structure comprises 358 residues: Ion-translocating oxidoreductase complex subunit D (358 aa).

Helical transmembrane passes span 19 to 39 (IMLWVILAMMPAFFTQIYYFG), 41 to 61 (GVLLQSALAIGTAIIAEFIAI), 79 to 99 (LTALILAMAIPPYAPYWVIII), and 125 to 145 (IGYVILLISFPLQMTTWMPPI). Thr-186 carries the FMN phosphoryl threonine modification. Transmembrane regions (helical) follow at residues 220 to 240 (FAQGWWQINVAFLAGGIFLIL), 248 to 268 (IPVAMLVTFFCLATATAFTGF), 271 to 291 (LSAISQLVSGAMMFGAFFIAT), 297 to 317 (SITPRGKIIFGALVGLFVYLI), and 321 to 341 (GNYPDGVAFAILLSNICVPLI).

Belongs to the NqrB/RnfD family. As to quaternary structure, the complex is composed of six subunits: RnfA, RnfB, RnfC, RnfD, RnfE and RnfG. The cofactor is FMN.

The protein resides in the cell inner membrane. Its function is as follows. Part of a membrane-bound complex that couples electron transfer with translocation of ions across the membrane. This is Ion-translocating oxidoreductase complex subunit D from Haemophilus influenzae (strain PittEE).